The sequence spans 186 residues: Large ribosomal subunit protein bL9 (186 aa).

The span at 151 to 167 (PEEAEKQARGEAIMREE) shows a compositional bias: basic and acidic residues. The tract at residues 151–186 (PEEAEKQARGEAIMREESEYELETGEEVAEGPEQTA) is disordered. The span at 168–180 (SEYELETGEEVAE) shows a compositional bias: acidic residues.

It belongs to the bacterial ribosomal protein bL9 family.

Its function is as follows. Binds to the 23S rRNA. The protein is Large ribosomal subunit protein bL9 of Acidiphilium cryptum (strain JF-5).